The sequence spans 375 residues: MRWYSYVIPAVILSIIAISGVWWNATLGTRLDQKVQLFLNEHSSILNAVYETTTIVYTEPLHTSVSETITSTSFVTETTTVTPTVTATAQELSTLNPHPENSKIVLLMGSNAQNDPSSPLNPYIRTIIKNRRDYAERHGFKFEFLDLDEYKPSIGDKPAPWAKIPMIKNVIRKYPDAEWVWWLDHDALIMNRDLNLVDHILKHEKLNSLLLRDTEYFSGFGIDSEGFRTPKNQDPDDIHFIIAQDFNGINAGSFLIRNSEVGTWMLDFWNEPLYKEHNGVFVEQQALSHMIYSHPIVHKHVGLVTLRSINAYDSSDPAWGYEDGDLCVHFAGCFVFQTCAQNFEKYGKIITEKQGHDWFDPSEKEYIEQRLFPQP.

Topologically, residues 1–2 are cytoplasmic; the sequence is MR. A helical; Signal-anchor for type II membrane protein transmembrane segment spans residues 3–23; sequence WYSYVIPAVILSIIAISGVWW. Residues 24 to 375 lie on the Lumenal side of the membrane; that stretch reads NATLGTRLDQ…YIEQRLFPQP (352 aa).

This sequence belongs to the glycosyltransferase 34 family.

The protein localises to the endoplasmic reticulum membrane. It localises to the golgi apparatus membrane. This is an uncharacterized protein from Schizosaccharomyces pombe (strain 972 / ATCC 24843) (Fission yeast).